The primary structure comprises 148 residues: Large ribosomal subunit protein bL9 (148 aa).

It belongs to the bacterial ribosomal protein bL9 family.

Its function is as follows. Binds to the 23S rRNA. This chain is Large ribosomal subunit protein bL9, found in Thermobifida fusca (strain YX).